The primary structure comprises 211 residues: Protein-L-isoaspartate O-methyltransferase (211 aa).

S62 is a catalytic residue.

Belongs to the methyltransferase superfamily. L-isoaspartyl/D-aspartyl protein methyltransferase family.

The protein localises to the cytoplasm. The catalysed reaction is [protein]-L-isoaspartate + S-adenosyl-L-methionine = [protein]-L-isoaspartate alpha-methyl ester + S-adenosyl-L-homocysteine. Its function is as follows. Catalyzes the methyl esterification of L-isoaspartyl residues in peptides and proteins that result from spontaneous decomposition of normal L-aspartyl and L-asparaginyl residues. It plays a role in the repair and/or degradation of damaged proteins. This is Protein-L-isoaspartate O-methyltransferase from Shewanella sp. (strain MR-4).